Consider the following 845-residue polypeptide: Synaptonemal complex protein 1 (845 aa).

The segment at 59–215 (ETRQVYVDLN…YQLTEEKEAQ (157 aa)) is interaction with SYCE3. Coiled coils occupy residues 64-211 (YVDL…LTEE) and 244-544 (LRTE…EIEV). The tract at residues 550–644 (EKLLGEVEKA…VSLKKQLEIE (95 aa)) is required for pH-induced assembly of C-terminal ends into antiparallel tetramers. The Nuclear localization signal signature appears at 553 to 556 (LGEV). A coiled-coil region spans residues 620-663 (KTALETELSNIRNELVSLKKQLEIEREEKEKLKLEKENTAILKD). Positions 657 to 845 (NTAILKDKKD…RLKEAEKLFA (189 aa)) are DNA-binding. Serine 676 is modified (phosphoserine). A compositionally biased stretch (polar residues) spans 684–703 (FDSKTTPSQNISRISSSMES). Positions 684-709 (FDSKTTPSQNISRISSSMESGKTKDN) are disordered. Positions 753 to 756 (KKRK) match the Nuclear localization signal motif. A disordered region spans residues 786 to 808 (LYNNNSPNSHLTPKQTPLSLSTP).

As to quaternary structure, structural component of synaptonemal complexes. Homotetramer that consists of an N-terminal four-helical bundle that bifurcates into two elongated C-terminal dimeric coiled coils. This tetrameric building block potentially self-assembles into a supramolecular zipper-like lattice to mediate meiotic chromosome synapsis. Self-assembly is likely initiated by local proton density at chromosome axis, which is predicted to trigger antiparallel back to back assembly of adjacent C-terminal ends into tetrameric structures that anchor to chromosomal DNA. Then the N-terminal ends are predicted to undergo cooperative antiparallel head to head assembly at the midline of synaptonemal complexes central element to form a zipper-like lattice between properly aligned homologous chromosomes. The nascent synapsis generated by SYCP1 is stabilized through interaction with central element proteins SYCE1 and SYCE2. Interacts (via tetrameric core) with SYCE3; the interaction remodels SYCP1 homotetramers to 2:1 heterotrimers with SYCE3. SYCP1/SYCE3 heterotrimers form lattice assemblies as part of the mature synaptonemal complex via both lateral and head-to-head interactions. Forms a complex with EWSR1, PRDM9, SYCP3 and REC8; complex formation is dependent of phosphorylated form of REC8 and requires PRDM9 bound to hotspot DNA; EWSR1 joins PRDM9 with the chromosomal axis through REC8. Interacts with SPO16.

The protein resides in the nucleus. It localises to the chromosome. Its subcellular location is the centromere. Functionally, major component of the transverse filaments of synaptonemal complexes, formed between homologous chromosomes during meiotic prophase. Required for normal assembly of the central element of the synaptonemal complexes. Required for normal centromere pairing during meiosis. Required for normal meiotic chromosome synapsis during oocyte and spermatocyte development and for normal male and female fertility. In Mesocricetus auratus (Golden hamster), this protein is Synaptonemal complex protein 1.